Reading from the N-terminus, the 97-residue chain is Co-chaperonin GroES (97 aa).

The protein belongs to the GroES chaperonin family. As to quaternary structure, heptamer of 7 subunits arranged in a ring. Interacts with the chaperonin GroEL.

The protein localises to the cytoplasm. In terms of biological role, together with the chaperonin GroEL, plays an essential role in assisting protein folding. The GroEL-GroES system forms a nano-cage that allows encapsulation of the non-native substrate proteins and provides a physical environment optimized to promote and accelerate protein folding. GroES binds to the apical surface of the GroEL ring, thereby capping the opening of the GroEL channel. The sequence is that of Co-chaperonin GroES from Stutzerimonas stutzeri (Pseudomonas stutzeri).